Reading from the N-terminus, the 788-residue chain is LPS-assembly protein LptD (788 aa).

The first 23 residues, 1 to 23 (MSLTSRSLLATMISLALYGPAMA), serve as a signal peptide directing secretion.

Belongs to the LptD family. In terms of assembly, component of the lipopolysaccharide transport and assembly complex. Interacts with LptE and LptA.

Its subcellular location is the cell outer membrane. Its function is as follows. Together with LptE, is involved in the assembly of lipopolysaccharide (LPS) at the surface of the outer membrane. In Photobacterium profundum (strain SS9), this protein is LPS-assembly protein LptD.